The primary structure comprises 319 residues: MAKRSKGRPVDGILLLNKPIGISSNKALQQTKGVYFAQKAGHTGALDPLATGMLPICFGEATKFTQFLLDTDKTYVVRAKLGERTTTSDSDGEIVSTKDVNVTREQLIKEIAAFVGESDQYPSMYSALKYQGRPLYKYAREGIEVPRKCRKINVFSLTFDEFDEVNNVIQMTAHVSKGTYIRTIVDDLGEKLGCGAHVVMLHRTAVGQYPAEKMVSLDEIEALLAKAKDEEVAPSTYLDALLLPLDTALVDLPVVEISKEQGSIFSHGQAIDLDIDLPEGAIKVVADGIFIGTGERNASGHLKVKRGLASQQDDYVKPE.

Aspartate 47 acts as the Nucleophile in catalysis.

This sequence belongs to the pseudouridine synthase TruB family. Type 1 subfamily.

The catalysed reaction is uridine(55) in tRNA = pseudouridine(55) in tRNA. In terms of biological role, responsible for synthesis of pseudouridine from uracil-55 in the psi GC loop of transfer RNAs. This Pseudoalteromonas translucida (strain TAC 125) protein is tRNA pseudouridine synthase B.